The chain runs to 136 residues: Large ribosomal subunit protein uL16 (136 aa).

The protein belongs to the universal ribosomal protein uL16 family. Part of the 50S ribosomal subunit.

Binds 23S rRNA and is also seen to make contacts with the A and possibly P site tRNAs. This chain is Large ribosomal subunit protein uL16, found in Shigella flexneri.